A 282-amino-acid chain; its full sequence is MYRFSNTVIGVLNLLTLLASIPIIGTALYKARSSTTCENFLQTPLLVIGFIILIVSLAGFIGACFNVAWALWVYLVVMIFLIATLMGLTLFGLVVTSQGGGVEVPGRIYKEYRLGDYHPWLRERVRDPEYWNSIRSCILSSKTCTKIESWTTLDYFQRDMTSVQSGCCKPPTACTYEAGVVDGGGDCFRWNNGVEMLCYECDACKAGVLEEIRLDWRKLSVVNILVLVLLIAVYAAGCCAFHNTRHAAHPYHPSDDNRMTRVRPRWDYYWWRWWHEKKEQLY.

Over 1-7 (MYRFSNT) the chain is Cytoplasmic. The helical transmembrane segment at 8–28 (VIGVLNLLTLLASIPIIGTAL) threads the bilayer. Over 29–44 (YKARSSTTCENFLQTP) the chain is Extracellular. The helical transmembrane segment at 45-65 (LLVIGFIILIVSLAGFIGACF) threads the bilayer. Over 66–74 (NVAWALWVY) the chain is Cytoplasmic. A helical membrane pass occupies residues 75–95 (LVVMIFLIATLMGLTLFGLVV). The Extracellular portion of the chain corresponds to 96 to 220 (TSQGGGVEVP…EIRLDWRKLS (125 aa)). Residues 221–241 (VVNILVLVLLIAVYAAGCCAF) traverse the membrane as a helical segment. The Cytoplasmic portion of the chain corresponds to 242 to 282 (HNTRHAAHPYHPSDDNRMTRVRPRWDYYWWRWWHEKKEQLY).

Belongs to the tetraspanin (TM4SF) family.

It localises to the membrane. In terms of biological role, may be involved in the regulation of cell differentiation. The chain is Tetraspanin-6 (TET6) from Arabidopsis thaliana (Mouse-ear cress).